Here is a 424-residue protein sequence, read N- to C-terminus: UPF0597 protein Sputcn32_1209 (424 aa).

The protein belongs to the UPF0597 family.

The polypeptide is UPF0597 protein Sputcn32_1209 (Shewanella putrefaciens (strain CN-32 / ATCC BAA-453)).